The chain runs to 44 residues: Large ribosomal subunit protein bL34 (44 aa).

Belongs to the bacterial ribosomal protein bL34 family.

The protein is Large ribosomal subunit protein bL34 of Neorickettsia sennetsu (strain ATCC VR-367 / Miyayama) (Ehrlichia sennetsu).